The sequence spans 206 residues: Guanylate kinase (206 aa).

The Guanylate kinase-like domain maps to 5–183 (FNLLILSGPS…SKEIILSIAK (179 aa)). ATP is bound at residue 12–19 (GPSGAGKS).

This sequence belongs to the guanylate kinase family.

It localises to the cytoplasm. The catalysed reaction is GMP + ATP = GDP + ADP. In terms of biological role, essential for recycling GMP and indirectly, cGMP. This chain is Guanylate kinase (gmk), found in Helicobacter pylori (strain ATCC 700392 / 26695) (Campylobacter pylori).